Consider the following 282-residue polypeptide: Ribosomal RNA small subunit methyltransferase A (282 aa).

Asn28, Leu30, Gly55, Glu77, Asp103, and Asn123 together coordinate S-adenosyl-L-methionine.

Belongs to the class I-like SAM-binding methyltransferase superfamily. rRNA adenine N(6)-methyltransferase family. RsmA subfamily.

Its subcellular location is the cytoplasm. It catalyses the reaction adenosine(1518)/adenosine(1519) in 16S rRNA + 4 S-adenosyl-L-methionine = N(6)-dimethyladenosine(1518)/N(6)-dimethyladenosine(1519) in 16S rRNA + 4 S-adenosyl-L-homocysteine + 4 H(+). Functionally, specifically dimethylates two adjacent adenosines (A1518 and A1519) in the loop of a conserved hairpin near the 3'-end of 16S rRNA in the 30S particle. May play a critical role in biogenesis of 30S subunits. This chain is Ribosomal RNA small subunit methyltransferase A, found in Afipia carboxidovorans (strain ATCC 49405 / DSM 1227 / KCTC 32145 / OM5) (Oligotropha carboxidovorans).